We begin with the raw amino-acid sequence, 330 residues long: Mas-related G-protein coupled receptor member X2 (330 aa).

The Extracellular segment spans residues 1-33 (MDPTTLVWGTESTTMNGNDQALPLLCGKETLIL). A helical membrane pass occupies residues 34–54 (VVLILFIALVGLVGNAFVLWL). Residues 55 to 63 (LGFRMRRNA) are Cytoplasmic-facing. Residues 64 to 84 (FSVYVLSLAGADFLFLCFPMI) traverse the membrane as a helical segment. Residues 85-96 (NCLAYLINFFHS) lie on the Extracellular side of the membrane. Residues 97–117 (ISINFPSFFTTVMTCAYLAGL) traverse the membrane as a helical segment. At 118–144 (SMLSAISTERCLSVLWPIWYRSRRPRH) the chain is on the cytoplasmic side. The helical transmembrane segment at 145–165 (LSAVMCVLLWALSLLLSILEG) threads the bilayer. The Extracellular segment spans residues 166–184 (KFCGFLFSDGDSGWCQTFD). The chain crosses the membrane as a helical span at residues 185-205 (FITAAWLMFLFVVLCGSSLAL). Topologically, residues 206–228 (LVRILCGSRGLPLTRLYLTILLT) are cytoplasmic. The chain crosses the membrane as a helical span at residues 229-249 (VLIFLLCGLPFGIQWFLILWI). At 250-264 (WKNSDVLFCHIHPVS) the chain is on the extracellular side. The helical transmembrane segment at 265-285 (VVLSSFNSSANPIIYFFVGSF) threads the bilayer. Residues 286–330 (RKQWRLRQPVLKLALQRALQDTAEVDHSEGCFSQGTLEMSGSSLV) lie on the Cytoplasmic side of the membrane.

The protein belongs to the G-protein coupled receptor 1 family. Mas subfamily.

It localises to the cell membrane. In terms of biological role, mast cell-specific receptor for basic secretagogues, i.e. cationic amphiphilic drugs, as well as endo- or exogenous peptides, consisting of a basic head group and a hydrophobic core. Recognizes and binds small molecules containing a cyclized tetrahydroisoquinoline (THIQ), such as non-steroidal neuromuscular blocking drugs (NMBDs), including tubocurarine and atracurium. In response to these compounds, mediates pseudo-allergic reactions characterized by histamine release, inflammation and airway contraction. The chain is Mas-related G-protein coupled receptor member X2 (MRGPRX2) from Trachypithecus francoisi (Francois' leaf monkey).